A 568-amino-acid polypeptide reads, in one-letter code: uncharacterized protein (568 aa).

This is an uncharacterized protein from Rickettsia prowazekii (strain Madrid E).